The primary structure comprises 552 residues: Glucose-6-phosphate isomerase (552 aa).

The Proton donor role is filled by Glu359. Catalysis depends on residues His390 and Lys514.

This sequence belongs to the GPI family.

Its subcellular location is the cytoplasm. The enzyme catalyses alpha-D-glucose 6-phosphate = beta-D-fructose 6-phosphate. It functions in the pathway carbohydrate biosynthesis; gluconeogenesis. Its pathway is carbohydrate degradation; glycolysis; D-glyceraldehyde 3-phosphate and glycerone phosphate from D-glucose: step 2/4. Catalyzes the reversible isomerization of glucose-6-phosphate to fructose-6-phosphate. The polypeptide is Glucose-6-phosphate isomerase (Streptomyces griseus subsp. griseus (strain JCM 4626 / CBS 651.72 / NBRC 13350 / KCC S-0626 / ISP 5235)).